Here is a 293-residue protein sequence, read N- to C-terminus: Indole-3-glycerol phosphate synthase (293 aa).

This sequence belongs to the TrpC family.

It catalyses the reaction 1-(2-carboxyphenylamino)-1-deoxy-D-ribulose 5-phosphate + H(+) = (1S,2R)-1-C-(indol-3-yl)glycerol 3-phosphate + CO2 + H2O. Its pathway is amino-acid biosynthesis; L-tryptophan biosynthesis; L-tryptophan from chorismate: step 4/5. The protein is Indole-3-glycerol phosphate synthase of Prochlorococcus marinus (strain SARG / CCMP1375 / SS120).